We begin with the raw amino-acid sequence, 214 residues long: Dephospho-CoA kinase (214 aa).

Residues Lys-3–Ala-202 enclose the DPCK domain. Gly-11–Arg-16 contributes to the ATP binding site.

Belongs to the CoaE family.

It localises to the cytoplasm. The enzyme catalyses 3'-dephospho-CoA + ATP = ADP + CoA + H(+). Its pathway is cofactor biosynthesis; coenzyme A biosynthesis; CoA from (R)-pantothenate: step 5/5. Its function is as follows. Catalyzes the phosphorylation of the 3'-hydroxyl group of dephosphocoenzyme A to form coenzyme A. In Bordetella bronchiseptica (strain ATCC BAA-588 / NCTC 13252 / RB50) (Alcaligenes bronchisepticus), this protein is Dephospho-CoA kinase.